The sequence spans 751 residues: Dachshund homolog 1 (751 aa).

The tract at residues 1-178 (MAVPAALIPP…PSPVENTPQN (178 aa)) is disordered. 2 stretches are compositionally biased toward low complexity: residues 20 to 53 (ISTS…SGPT) and 61 to 74 (ASSA…TVTS). Gly residues-rich tracts occupy residues 75–97 (PGGG…GGGS) and 107–119 (SSGG…GGGA). Residues 120–156 (SSTPITASTGSSSSSSSSSSSSSSSSSSSSSSSSSSS) are compositionally biased toward low complexity. Over residues 167–178 (STPSPVENTPQN) the composition is skewed to polar residues. The DACHbox-N stretch occupies residues 182-268 (KMVDLRGAKV…LISRKDFETL (87 aa)). Positions 182-377 (KMVDLRGAKV…VGSSGGSWDK (196 aa)) are interaction with SIX6 and HDAC3. 4 disordered regions span residues 273-295 (TNAS…PENS), 351-393 (SNNQ…APVA), 467-525 (SPPS…RIPV), and 537-556 (MGLS…AGHD). Polar residues-rich tracts occupy residues 285-294 (RTQSVTSPEN) and 351-369 (SNNQ…SSVG). Residue S484 is modified to Phosphoserine. The span at 499 to 517 (SHPSSHRSSSVSSSPARTE) shows a compositional bias: low complexity. Residues 609 to 689 (SSIETLLTNI…KAKRKLQEAL (81 aa)) are DACHbox-C. The tract at residues 620–699 (GLLKVAIDNA…EFETKRREQA (80 aa)) is interaction with SIN3A. Positions 623 to 711 (KVAIDNARAQ…TLKQAASADS (89 aa)) form a coiled coil.

The protein belongs to the DACH/dachshund family. In terms of assembly, interacts with SIX1, SIX6 and EYA3. Interacts with NCOR1 and HDAC3 through its N-terminus. Interacts with SIN3A through its C-terminus. Interacts with SMAD3 and SMAD4. Expressed at higher levels in adult kidney and lung, and at lower levels in brain and testis. Expressed in embryonal kidneys, eyes, cochleae and limb buds.

Its subcellular location is the nucleus. Transcription factor that is involved in regulation of organogenesis. Seems to be a regulator of SIX1, SIX6 and probably SIX5. Corepression of precursor cell proliferation in myoblasts by SIX1 is switched to coactivation through recruitment of EYA3 to the SIX1-DACH1 complex. Transcriptional activation also seems to involve association of CREBBP. Seems to act as a corepressor of SIX6 in regulating proliferation by directly repressing cyclin-dependent kinase inhibitors, including the p27Kip1 promoter. Inhibits TGF-beta signaling through interaction with SMAD4 and NCOR1. Binds to chromatin DNA via its DACHbox-N domain. The chain is Dachshund homolog 1 (Dach1) from Mus musculus (Mouse).